Reading from the N-terminus, the 334-residue chain is Tryptophan--tRNA ligase (334 aa).

Residues 11-13 and 19-20 each bind ATP; these read QPS and GN. Residues 12–20 carry the 'HIGH' region motif; the sequence is PSGELTIGN. Aspartate 135 serves as a coordination point for L-tryptophan. ATP-binding positions include 147 to 149, valine 186, and 195 to 199; these read GED and KMSKS. A 'KMSKS' region motif is present at residues 195 to 199; that stretch reads KMSKS.

The protein belongs to the class-I aminoacyl-tRNA synthetase family. In terms of assembly, homodimer.

The protein resides in the cytoplasm. It carries out the reaction tRNA(Trp) + L-tryptophan + ATP = L-tryptophyl-tRNA(Trp) + AMP + diphosphate + H(+). In terms of biological role, catalyzes the attachment of tryptophan to tRNA(Trp). This Shigella flexneri protein is Tryptophan--tRNA ligase.